The chain runs to 425 residues: Metalloprotease AF_0655 (425 aa).

It belongs to the peptidase U62 family.

Functionally, probable metalloprotease. The polypeptide is Metalloprotease AF_0655 (Archaeoglobus fulgidus (strain ATCC 49558 / DSM 4304 / JCM 9628 / NBRC 100126 / VC-16)).